The following is a 189-amino-acid chain: Elongation factor P (189 aa).

Belongs to the elongation factor P family.

The protein localises to the cytoplasm. Its pathway is protein biosynthesis; polypeptide chain elongation. In terms of biological role, involved in peptide bond synthesis. Stimulates efficient translation and peptide-bond synthesis on native or reconstituted 70S ribosomes in vitro. Probably functions indirectly by altering the affinity of the ribosome for aminoacyl-tRNA, thus increasing their reactivity as acceptors for peptidyl transferase. In Xanthobacter autotrophicus (strain ATCC BAA-1158 / Py2), this protein is Elongation factor P.